We begin with the raw amino-acid sequence, 288 residues long: 11-beta-hydroxysteroid dehydrogenase 1 (288 aa).

The Cytoplasmic segment spans residues 1–4 (MKKY). The chain crosses the membrane as a helical; Signal-anchor for type II membrane protein span at residues 5 to 20 (LLPVLVLCLGYYYSTN). Topologically, residues 21–288 (EEFRPEMLQG…SYNRDLFVSN (268 aa)) are lumenal. Residues 37 to 63 (GASK…TARS), 88 to 89 (TM), and 115 to 117 (NHI) each bind NADP(+). Asn158 is a glycosylation site (N-linked (GlcNAc...) asparagine). Ser166 is a substrate binding site. The Proton acceptor role is filled by Tyr179. 179-183 (YSASK) is an NADP(+) binding site. An N-linked (GlcNAc...) asparagine glycan is attached at Asn203. NADP(+) is bound by residues 212 to 218 (GFIDTET) and 214 to 218 (IDTET).

The protein belongs to the short-chain dehydrogenases/reductases (SDR) family. Homodimer. Glycosylated. In terms of tissue distribution, liver, kidney, lung and testis. Brain. Expressed in liver (at protein level).

Its subcellular location is the endoplasmic reticulum membrane. It carries out the reaction an 11beta-hydroxysteroid + NADP(+) = an 11-oxosteroid + NADPH + H(+). It catalyses the reaction corticosterone + NADP(+) = 11-dehydrocorticosterone + NADPH + H(+). The enzyme catalyses a 7beta-hydroxysteroid + NADP(+) = a 7-oxosteroid + NADPH + H(+). The catalysed reaction is 7-oxocholesterol + NADPH + H(+) = 7beta-hydroxycholesterol + NADP(+). It carries out the reaction chenodeoxycholate + NADP(+) = 7-oxolithocholate + NADPH + H(+). It catalyses the reaction 7-oxolithocholate + NADPH + H(+) = ursodeoxycholate + NADP(+). The enzyme catalyses glycochenodeoxycholate + NADP(+) = 7-oxoglycolithocholate + NADPH + H(+). The catalysed reaction is taurochenodeoxycholate + NADP(+) = 7-oxotaurolithocholate + NADPH + H(+). It carries out the reaction tauroursodeoxycholate + NADP(+) = 7-oxotaurolithocholate + NADPH + H(+). It catalyses the reaction glycoursodeoxycholate + NADP(+) = 7-oxoglycolithocholate + NADPH + H(+). The enzyme catalyses 7-oxopregnenolone + NADPH + H(+) = 7beta-hydroxypregnenolone + NADP(+). The catalysed reaction is 3beta,7alpha-dihydroxyandrost-5-en-17-one + NADP(+) = 3beta-hydroxy-5-androstene-7,17-dione + NADPH + H(+). It carries out the reaction 3beta-hydroxy-5-androstene-7,17-dione + NADPH + H(+) = 3beta,7beta-dihydroxyandrost-5-en-17-one + NADP(+). It catalyses the reaction 3beta-hydroxy-5alpha-androstane-7,17-dione + NADPH + H(+) = 3beta,7beta-dihydroxy-5alpha-androstan-17-one + NADP(+). Its function is as follows. Controls the reversible conversion of biologically active glucocorticoids such as 11-dehydrocorticosterone to corticosterone using NADP(H). Participates in the corticosteroid receptor-mediated anti-inflammatory response, as well as metabolic and homeostatic processes. Bidirectional in vitro, predominantly functions as a reductase in vivo, thereby increasing the concentration of active glucocorticoids. It has broad substrate specificity, besides glucocorticoids, it accepts other steroid and sterol substrates. Interconverts 7-oxo- and 7-hydroxy-neurosteroids such as 7-oxopregnenolone and 7beta-hydroxypregnenolone, 7-oxodehydroepiandrosterone (3beta-hydroxy-5-androstene-7,17-dione) and 7beta-hydroxydehydroepiandrosterone (3beta,7beta-dihydroxyandrost-5-en-17-one), among others. Catalyzes the stereo-specific conversion of the major dietary oxysterol, 7-ketocholesterol (7-oxocholesterol), into the more polar 7-beta-hydroxycholesterol metabolite. 7-oxocholesterol is one of the most important oxysterols, it participates in several events such as induction of apoptosis, accumulation in atherosclerotic lesions, lipid peroxidation, and induction of foam cell formation. Mediates the 7-oxo reduction of 7-oxolithocholate mainly to chenodeoxycholate, and to a lesser extent to ursodeoxycholate, both in its free form and when conjugated to glycine or taurine, providing a link between glucocorticoid activation and bile acid metabolism. Catalyzes the synthesis of 7-beta-25-dihydroxycholesterol from 7-oxo-25-hydroxycholesterol in vitro, which acts as a ligand for the G-protein-coupled receptor (GPCR) Epstein-Barr virus-induced gene 2 (EBI2) and may thereby regulate immune cell migration. The protein is 11-beta-hydroxysteroid dehydrogenase 1 of Rattus norvegicus (Rat).